The sequence spans 201 residues: Sec-independent protein translocase protein TatB (201 aa).

Residues 1 to 21 traverse the membrane as a helical segment; the sequence is MLDLGWSEILVIAVVLIVVVG. The interval 96 to 201 is disordered; sequence LSEAAKAKPA…RRKKTAGTAP (106 aa). Low complexity-rich tracts occupy residues 102 to 114 and 159 to 187; these read AKPA…AADS and TSAK…APAK. The span at 189-201 shows a compositional bias: basic residues; that stretch reads PSPRRKKTAGTAP.

Belongs to the TatB family. The Tat system comprises two distinct complexes: a TatABC complex, containing multiple copies of TatA, TatB and TatC subunits, and a separate TatA complex, containing only TatA subunits. Substrates initially bind to the TatABC complex, which probably triggers association of the separate TatA complex to form the active translocon.

It localises to the cell inner membrane. In terms of biological role, part of the twin-arginine translocation (Tat) system that transports large folded proteins containing a characteristic twin-arginine motif in their signal peptide across membranes. Together with TatC, TatB is part of a receptor directly interacting with Tat signal peptides. TatB may form an oligomeric binding site that transiently accommodates folded Tat precursor proteins before their translocation. This Chelativorans sp. (strain BNC1) protein is Sec-independent protein translocase protein TatB.